Here is a 309-residue protein sequence, read N- to C-terminus: Ferrochelatase (309 aa).

Fe cation contacts are provided by H187 and E265.

It belongs to the ferrochelatase family.

It localises to the cytoplasm. The catalysed reaction is heme b + 2 H(+) = protoporphyrin IX + Fe(2+). Its pathway is porphyrin-containing compound metabolism; protoheme biosynthesis; protoheme from protoporphyrin-IX: step 1/1. Catalyzes the ferrous insertion into protoporphyrin IX. This is Ferrochelatase from Nitratiruptor sp. (strain SB155-2).